Here is a 1633-residue protein sequence, read N- to C-terminus: Serine-aspartate repeat-containing protein F (1633 aa).

An N-terminal signal peptide occupies residues M1–A45. The ligand binding A region stretch occupies residues A46 to P678. Residues K51–D269 are disordered. Over residues A61–S74 the composition is skewed to basic and acidic residues. 2 stretches are compositionally biased toward polar residues: residues G85 to T99 and P146 to N168. Basic and acidic residues predominate over residues K175–T184. Residues Q186–Q226 are compositionally biased toward polar residues. Residues L227 to T253 show a composition bias toward basic and acidic residues. Polar residues predominate over residues K255–S266. CNA-B domains are found at residues T679–P797, K798–P907, I908–P1018, and K1019–D1129. The segment at T679–D1129 is type I collagen binding region. The tract at residues F862–T889 is disordered. The tract at residues K1085 to T1608 is disordered. Residues E1107–F1119 are compositionally biased toward basic and acidic residues. Residues Y1125–S1584 show a composition bias toward acidic residues. The span at D1585 to K1606 shows a compositional bias: basic and acidic residues. Residues L1594–G1598 carry the LPXTG sorting signal motif. Position 1597 is a pentaglycyl murein peptidoglycan amidated threonine (T1597). Residues G1598 to K1633 constitute a propeptide, removed by sortase.

It belongs to the serine-aspartate repeat-containing protein (SDr) family.

It localises to the secreted. It is found in the cell wall. In terms of biological role, binds to type I collagen via alpha-2(I) or alpha-1(I) chains. The protein is Serine-aspartate repeat-containing protein F (sdrF) of Staphylococcus epidermidis (strain ATCC 12228 / FDA PCI 1200).